The chain runs to 208 residues: Uracil phosphoribosyltransferase (208 aa).

Residues arginine 78, arginine 103, and 130–138 (DPMLATGGS) contribute to the 5-phospho-alpha-D-ribose 1-diphosphate site. Uracil contacts are provided by residues isoleucine 193 and 198 to 200 (GDA). Aspartate 199 contributes to the 5-phospho-alpha-D-ribose 1-diphosphate binding site.

Belongs to the UPRTase family. Mg(2+) serves as cofactor.

The enzyme catalyses UMP + diphosphate = 5-phospho-alpha-D-ribose 1-diphosphate + uracil. The protein operates within pyrimidine metabolism; UMP biosynthesis via salvage pathway; UMP from uracil: step 1/1. Its activity is regulated as follows. Allosterically activated by GTP. Functionally, catalyzes the conversion of uracil and 5-phospho-alpha-D-ribose 1-diphosphate (PRPP) to UMP and diphosphate. This is Uracil phosphoribosyltransferase from Shewanella frigidimarina (strain NCIMB 400).